The following is a 319-amino-acid chain: Ribonucleoside-diphosphate reductase small chain (319 aa).

Fe cation-binding residues include Asp70, Glu101, and His104. The active site involves Tyr108. Positions 163, 197, and 200 each coordinate Fe cation. Residues 313-319 (FSLDVDF) form an interaction with R1 region.

The protein belongs to the ribonucleoside diphosphate reductase small chain family. As to quaternary structure, interacts with RNR1/OPG080 subunit. Can interact with host RNR1 supunit. Requires Fe cation as cofactor.

It carries out the reaction a 2'-deoxyribonucleoside 5'-diphosphate + [thioredoxin]-disulfide + H2O = a ribonucleoside 5'-diphosphate + [thioredoxin]-dithiol. Its function is as follows. Ribonucleoside-diphosphate reductase holoenzyme provides the precursors necessary for viral DNA synthesis. Allows virus growth in non-dividing cells. Catalyzes the biosynthesis of deoxyribonucleotides from the corresponding ribonucleotides. The chain is Ribonucleoside-diphosphate reductase small chain (OPG048) from Homo sapiens (Human).